A 1068-amino-acid chain; its full sequence is Protein AF-10 (1068 aa).

The segment at Ile22–Gln74 adopts a PHD-type 1 zinc-finger fold. A C2HC pre-PHD-type zinc finger spans residues Arg79 to Val112. A self-association region spans residues Val80–Ala287. A required for interaction with histone H3 region spans residues Ala106–Tyr190. The PHD-type 2 zinc finger occupies Lys135–Phe198. Residues Asp141–Lys233 are interaction with FSTL3. The interval Arg206–Thr260 is disordered. Residues Ser211–His222 show a composition bias toward low complexity. Ser217 carries the phosphoserine modification. Residues Ser223–Lys240 are compositionally biased toward basic and acidic residues. A Phosphoserine modification is found at Ser252. Residue Lys280 forms a Glycyl lysine isopeptide (Lys-Gly) (interchain with G-Cter in SUMO2) linkage. A compositionally biased stretch (polar residues) spans Asn291–Lys305. The interval Asn291–Ala505 is disordered. Positions Asp306–Gly317 are enriched in basic and acidic residues. The tract at residues Arg311 to Leu674 is DNA-binding. A compositionally biased stretch (low complexity) spans Ser352–Gln372. Composition is skewed to polar residues over residues Tyr387 to Thr396 and Ser404 to Pro446. Phosphoserine is present on Ser436. The span at Glu465–Gly483 shows a compositional bias: basic residues. Positions Val490 to Ala505 are enriched in low complexity. At Ser532 the chain carries Phosphoserine. The span at Ser583 to Ser594 shows a compositional bias: low complexity. Disordered regions lie at residues Ser583–Pro612 and Asn660–Asn708. Composition is skewed to polar residues over residues His595–Leu604 and Asn660–Asn673. Low complexity predominate over residues Leu674–Leu694. Residues Ser684, Ser686, and Ser689 each carry the phosphoserine modification. The segment at Asn703–Thr784 is transactivation domain; required for DOT1L-binding. Positions Leu750–Leu778 are leucine-zipper. The span at Ala800–Ser814 shows a compositional bias: polar residues. A disordered region spans residues Ala800–Ser865. 2 stretches are compositionally biased toward low complexity: residues Leu834–Ser848 and Gln855–Ser865.

Self-associates. Interacts with FSTL3 isoform 2; the interaction enhances MLLT10 in vitro transcriptional activity and self-association. Interacts with YEATS4. Interacts with SS18. Interacts with DOT1L; this interaction also occurs with the KMT2A/MLL1 fusion protein. Interacts with histone H3; interaction is necessary for MLLT10 binding to nucleosomes; interaction is inhibited by histone H3 'Lys-27' methylations (H3K27me1, H3K27me2 and H3K27me3) amd acetylation; interaction stabilizes association of MLLT10 at chromatin; interaction is essential for histone H3 'Lys-79' dimethylation (H3K79me2). Expressed abundantly in testis.

Its subcellular location is the nucleus. Functionally, probably involved in transcriptional regulation. In vitro or as fusion protein with KMT2A/MLL1 has transactivation activity. Binds to cruciform DNA. In cells, binding to unmodified histone H3 regulates DOT1L functions including histone H3 'Lys-79' dimethylation (H3K79me2) and gene activation. This is Protein AF-10 from Homo sapiens (Human).